A 129-amino-acid chain; its full sequence is Protein BEX2 (129 aa).

The interval 1 to 38 is disordered; that stretch reads MESKVEQGVKNLNMENDHQEKEEKEEKPQDANKREPVV. Positions 15–36 are enriched in basic and acidic residues; sequence ENDHQEKEEKEEKPQDANKREP. Arg-51 is modified (omega-N-methylarginine). Positions 108–129 are disordered; sequence SLRAVSTDPPHHDHHDEFCLMP. The segment covering 116–129 has biased composition (basic and acidic residues); it reads PPHHDHHDEFCLMP. The his cluster stretch occupies residues 118-122; sequence HHDHH. Cys-126 serves as a coordination point for Zn(2+).

The protein belongs to the BEX family. As to quaternary structure, interacts with LMO2, possibly leading to regulate the transcriptional activity of a DNA-binding complex containing LMO2. Interacts with OMP.

The protein resides in the nucleus. The protein localises to the cytoplasm. Functionally, regulator of mitochondrial apoptosis and G1 cell cycle. Regulates the level of PP2A regulatory subunit B and PP2A phosphatase activity. In absence of reductive stress, acts as a pseudosubstrate for the CRL2(FEM1B) complex: associates with FEM1B via zinc, thereby preventing association between FEM1B and its substrates. The polypeptide is Protein BEX2 (Bex2) (Rattus norvegicus (Rat)).